The chain runs to 122 residues: Small ribosomal subunit protein uS13 (122 aa).

Positions Gly95–Lys122 are disordered.

The protein belongs to the universal ribosomal protein uS13 family. Part of the 30S ribosomal subunit. Forms a loose heterodimer with protein S19. Forms two bridges to the 50S subunit in the 70S ribosome.

Located at the top of the head of the 30S subunit, it contacts several helices of the 16S rRNA. In the 70S ribosome it contacts the 23S rRNA (bridge B1a) and protein L5 of the 50S subunit (bridge B1b), connecting the 2 subunits; these bridges are implicated in subunit movement. Contacts the tRNAs in the A and P-sites. This Xanthobacter autotrophicus (strain ATCC BAA-1158 / Py2) protein is Small ribosomal subunit protein uS13.